We begin with the raw amino-acid sequence, 462 residues long: dTDP-4-dehydro-2,6-dideoxy-D-glucose 3-dehydratase (462 aa).

Residues 112-113, Asp220, and Ser241 contribute to the pyridoxal 5'-phosphate site; that span reads GS. His246 serves as the catalytic Proton donor/acceptor. Position 314 (Asn314) interacts with pyridoxal 5'-phosphate.

The protein belongs to the DegT/DnrJ/EryC1 family. As to quaternary structure, homodimer. The cofactor is pyridoxal 5'-phosphate.

The catalysed reaction is dTDP-4-dehydro-2,6-dideoxy-alpha-D-glucose + 2 reduced [2Fe-2S]-[ferredoxin] + 2 H(+) = dTDP-4-dehydro-2,3,6-trideoxy-alpha-D-hexopyranose + 2 oxidized [2Fe-2S]-[ferredoxin] + H2O. Functionally, involved in the biosynthesis of forosamine ((4-dimethylamino)-2,3,4,6-tetradeoxy-alpha-D-threo-hexopyranose), a highly deoxygenated sugar component of several bioactive natural products such as the insecticidal spinosyns A and D. Catalyzes C-3 deoxygenation of dTDP-4-keto-2,6-dideoxy-alpha-D-glucose to yield dTDP-4-keto-2,3,6-trideoxy-D-glucose via a combined transamination-deoxygenation reaction. The catalysis is initiated by a transamination step in which pyridoxal 5'-phosphate (PLP) is converted to pyridoxamine 5'-phosphate (PMP) in the presence of L-glutamate. This coenzyme then forms a Schiff base with dTDP-4-keto-2,6-dideoxy-alpha-D-glucose and the resulting adduct undergoes a PMP-mediated beta-dehydration reaction to give a sugar enamine intermediate, which after a 2 electrons reduction and hydrolysis yields dTDP-4-keto-2,3,6-trideoxy-D-glucose as a product. Requires cellular reductase (ferredoxin or flavodoxin reductase) rather than a specific partner reductase. L-glutamate is 20-fold more efficient than L-aspartate as an amino donor. In the absence of an electron source and in the presence of L-glutamate, catalyzes a transamination reaction, converting dTDP-4-keto-2,6-dideoxy-alpha-D-glucose to dTDP-4-amino-2,4,6-trideoxy-D-glucose. This Saccharopolyspora spinosa protein is dTDP-4-dehydro-2,6-dideoxy-D-glucose 3-dehydratase.